The primary structure comprises 128 residues: Holo-[acyl-carrier-protein] synthase (128 aa).

Positions 8 and 58 each coordinate Mg(2+).

Belongs to the P-Pant transferase superfamily. AcpS family. It depends on Mg(2+) as a cofactor.

The protein resides in the cytoplasm. The enzyme catalyses apo-[ACP] + CoA = holo-[ACP] + adenosine 3',5'-bisphosphate + H(+). In terms of biological role, transfers the 4'-phosphopantetheine moiety from coenzyme A to a Ser of acyl-carrier-protein. The sequence is that of Holo-[acyl-carrier-protein] synthase from Alkalilimnicola ehrlichii (strain ATCC BAA-1101 / DSM 17681 / MLHE-1).